The sequence spans 345 residues: ATP-dependent (S)-NAD(P)H-hydrate dehydratase (345 aa).

Residues isoleucine 9–valine 332 form the YjeF C-terminal domain. Residues glycine 113 and asparagine 170–arginine 176 each bind (6S)-NADPHX. ATP is bound by residues lysine 208–aspartate 212 and glycine 241–glycine 250. Residue aspartate 251 coordinates (6S)-NADPHX.

This sequence belongs to the NnrD/CARKD family. Mg(2+) serves as cofactor.

It localises to the cytoplasm. It catalyses the reaction (6S)-NADHX + ATP = ADP + phosphate + NADH + H(+). The enzyme catalyses (6S)-NADPHX + ATP = ADP + phosphate + NADPH + H(+). In terms of biological role, catalyzes the dehydration of the S-form of NAD(P)HX at the expense of ATP, which is converted to ADP. Together with NAD(P)HX epimerase, which catalyzes the epimerization of the S- and R-forms, the enzyme allows the repair of both epimers of NAD(P)HX, a damaged form of NAD(P)H that is a result of enzymatic or heat-dependent hydration. In Cryptococcus neoformans var. neoformans serotype D (strain JEC21 / ATCC MYA-565) (Filobasidiella neoformans), this protein is ATP-dependent (S)-NAD(P)H-hydrate dehydratase.